The following is a 479-amino-acid chain: Odorant receptor coreceptor (479 aa).

At 1-43 (MHVQPTKYHGLVLDLMPNIRLMQGFGHFLFRYVSGPVLIRKLY) the chain is on the cytoplasmic side. Residues 44-64 (SWWNLIMILLQYFAIMGNLVM) traverse the membrane as a helical segment. Residues 65-73 (NTGDVNELT) lie on the Extracellular side of the membrane. The helical transmembrane segment at 74–94 (ANTITTLFFTHSVTKFIYVAV) threads the bilayer. The Cytoplasmic portion of the chain corresponds to 95–133 (NSEHFYRTLGIWNQPNSHSLFAESDARYHSIALAKMRKL). A helical transmembrane segment spans residues 134-154 (LVMVMVTTVLSVVAWITITFF). The Extracellular segment spans residues 155 to 187 (GDSVKNVFDKETNETYTVEIPRLPIKALYPWDA). The N-linked (GlcNAc...) asparagine glycan is linked to asparagine 167. The chain crosses the membrane as a helical span at residues 188–208 (MSGVPYFFSFVYQAYFLLFSM). Residues 209-344 (CQANLADVMF…VERHKHVVRL (136 aa)) lie on the Cytoplasmic side of the membrane. Residues 345 to 365 (VSAIGETYGAALLLHMLTSTI) traverse the membrane as a helical segment. The Extracellular portion of the chain corresponds to 366 to 383 (KLTLLAYQATKIDALNVY). Residues 384-404 (GLTVIGYLVYALAQVFLFCIF) form a helical membrane-spanning segment. Topologically, residues 405 to 455 (GNRLIEESSSVMEAAYSCHWYDGSEEAKTFVQIVCQQCQKAMTISGAKFFT) are cytoplasmic. Residues 456 to 476 (VSLDLFASVLGAVVTYFMVLV) form a helical membrane-spanning segment. The Extracellular segment spans residues 477-479 (QLK).

The protein belongs to the insect chemoreceptor superfamily. Heteromeric odorant receptor channel (TC 1.A.69) family. Orco subfamily. As to quaternary structure, heterodimer with conventional odorant receptors (ORs). As to expression, expressed in female antenna, maxillary palp and proboscis. Not detected in male tissues.

It localises to the cell membrane. Functionally, odorant coreceptor which complexes with conventional odorant receptors (ORs) to form odorant-sensing units, providing sensitive and prolonged odorant signaling and calcium permeability. Orco is a universal and integral part of the functional odorant receptor, involved in the dendritic localization of other olfactory receptors. Required for detecting a host for blood feeding. Plays a key role in preferred attraction of females for humans over non-human hosts for blood feeding. This is Odorant receptor coreceptor from Aedes albopictus (Asian tiger mosquito).